Reading from the N-terminus, the 457-residue chain is Chromosomal replication initiator protein DnaA (457 aa).

The interval 1–75 (MDAQLNNLWE…ALKIVTSRKF (75 aa)) is domain I, interacts with DnaA modulators. Residues 75–118 (FKIEFYLESDLEEEKENEEKQKEEKKDNTNDVDGSIVVSDEMSA) form a domain II region. Positions 87 to 108 (EEKENEEKQKEEKKDNTNDVDG) are disordered. Over residues 91–103 (NEEKQKEEKKDNT) the composition is skewed to basic and acidic residues. The domain III, AAA+ region stretch occupies residues 119–335 (TLNPKYTFQS…GALIRIIAYS (217 aa)). Residues G163, G165, K166, and T167 each coordinate ATP. The domain IV, binds dsDNA stretch occupies residues 336 to 457 (SLTNRDVSVD…NDITKKLTQK (122 aa)).

The protein belongs to the DnaA family. In terms of assembly, oligomerizes as a right-handed, spiral filament on DNA at oriC.

The protein resides in the cytoplasm. In terms of biological role, plays an essential role in the initiation and regulation of chromosomal replication. ATP-DnaA binds to the origin of replication (oriC) to initiate formation of the DNA replication initiation complex once per cell cycle. Binds the DnaA box (a 9 base pair repeat at the origin) and separates the double-stranded (ds)DNA. Forms a right-handed helical filament on oriC DNA; dsDNA binds to the exterior of the filament while single-stranded (ss)DNA is stabiized in the filament's interior. The ATP-DnaA-oriC complex binds and stabilizes one strand of the AT-rich DNA unwinding element (DUE), permitting loading of DNA polymerase. After initiation quickly degrades to an ADP-DnaA complex that is not apt for DNA replication. Binds acidic phospholipids. In Clostridium perfringens (strain SM101 / Type A), this protein is Chromosomal replication initiator protein DnaA.